The primary structure comprises 294 residues: P32 adhesin (294 aa).

Helical transmembrane passes span 11–31 (LVGV…VGLT) and 66–86 (VVGA…GIGI). Repeat copies occupy residues 172–193 (GGPM…PPQM) and 194–214 (GGMP…PPQM). Positions 172–214 (GGPMQPNQMGMRPGFNQMPPQMGGMPPNQMGMRPGFNQMPPQM) are 2 X 22 AA repeats. The tract at residues 234–294 (RPGFRPQPGG…AGFPPQNGPR (61 aa)) is disordered. Gly residues predominate over residues 241-256 (PGGGVPMGNKAGGGFN).

The protein resides in the cell projection. It is found in the attachment organelle membrane. Adhesin necessary for successful cytadherence and virulence. This chain is P32 adhesin (mgc2), found in Mycoplasmoides gallisepticum (strain R(low / passage 15 / clone 2)) (Mycoplasma gallisepticum).